The sequence spans 301 residues: Protease HtpX (301 aa).

2 consecutive transmembrane segments (helical) span residues 4 to 24 (IGLF…ILSL) and 38 to 58 (LGNL…VSLF). A Zn(2+)-binding site is contributed by histidine 147. Glutamate 148 is a catalytic residue. Histidine 151 provides a ligand contact to Zn(2+). 2 helical membrane-spanning segments follow: residues 155 to 175 (GDMV…MFFA) and 200 to 220 (FIIT…IVMW). Residue glutamate 226 coordinates Zn(2+).

Belongs to the peptidase M48B family. Requires Zn(2+) as cofactor.

It localises to the cell inner membrane. The polypeptide is Protease HtpX (Acinetobacter baumannii (strain AB307-0294)).